The primary structure comprises 261 residues: Tyrosine phosphatase-like protein H5 (261 aa).

A Tyrosine-protein phosphatase domain is found at 26–261 (LIKKEHDKVL…ESVEQEYFVP (236 aa)).

The protein belongs to the protein-tyrosine phosphatase family.

The sequence is that of Tyrosine phosphatase-like protein H5 (H6) from Microplitis demolitor bracovirus (isolate Webb) (MdBV).